A 227-amino-acid polypeptide reads, in one-letter code: Biosynthetic peptidoglycan transglycosylase (227 aa).

Residues 7–27 traverse the membrane as a helical segment; that stretch reads VALLTLLLLVAAPYVLTLVYG.

This sequence belongs to the glycosyltransferase 51 family.

It localises to the cell inner membrane. It catalyses the reaction [GlcNAc-(1-&gt;4)-Mur2Ac(oyl-L-Ala-gamma-D-Glu-L-Lys-D-Ala-D-Ala)](n)-di-trans,octa-cis-undecaprenyl diphosphate + beta-D-GlcNAc-(1-&gt;4)-Mur2Ac(oyl-L-Ala-gamma-D-Glu-L-Lys-D-Ala-D-Ala)-di-trans,octa-cis-undecaprenyl diphosphate = [GlcNAc-(1-&gt;4)-Mur2Ac(oyl-L-Ala-gamma-D-Glu-L-Lys-D-Ala-D-Ala)](n+1)-di-trans,octa-cis-undecaprenyl diphosphate + di-trans,octa-cis-undecaprenyl diphosphate + H(+). The protein operates within cell wall biogenesis; peptidoglycan biosynthesis. Functionally, peptidoglycan polymerase that catalyzes glycan chain elongation from lipid-linked precursors. In Rhodopseudomonas palustris (strain HaA2), this protein is Biosynthetic peptidoglycan transglycosylase.